The primary structure comprises 79 residues: D-alanyl carrier protein (79 aa).

Residues 1–77 (MDTKQAVLDI…KIIAKVESLR (77 aa)) form the Carrier domain. Position 35 is an O-(pantetheine 4'-phosphoryl)serine (Ser-35).

It belongs to the DltC family. In terms of processing, 4'-phosphopantetheine is transferred from CoA to a specific serine of apo-DCP.

It is found in the cytoplasm. Its pathway is cell wall biogenesis; lipoteichoic acid biosynthesis. In terms of biological role, carrier protein involved in the D-alanylation of lipoteichoic acid (LTA). The loading of thioester-linked D-alanine onto DltC is catalyzed by D-alanine--D-alanyl carrier protein ligase DltA. The DltC-carried D-alanyl group is further transferred to cell membrane phosphatidylglycerol (PG) by forming an ester bond, probably catalyzed by DltD. D-alanylation of LTA plays an important role in modulating the properties of the cell wall in Gram-positive bacteria, influencing the net charge of the cell wall. The sequence is that of D-alanyl carrier protein from Lactobacillus gasseri (strain ATCC 33323 / DSM 20243 / BCRC 14619 / CIP 102991 / JCM 1131 / KCTC 3163 / NCIMB 11718 / NCTC 13722 / AM63).